We begin with the raw amino-acid sequence, 320 residues long: ATP-dependent 6-phosphofructokinase (320 aa).

Gly12 provides a ligand contact to ATP. ADP-binding positions include Arg22–Arg26 and Arg55–Asp60. Residues Arg73–Phe74 and Gly103–Ser106 each bind ATP. A Mg(2+)-binding site is contributed by Asp104. Residue Thr126–Asp128 participates in substrate binding. Residue Asp128 is the Proton acceptor of the active site. An ADP-binding site is contributed by Arg155. Substrate-binding positions include Arg163 and Met170–Arg172. ADP contacts are provided by residues Gly186–Glu188, Lys212, and Lys214–His216. Substrate-binding positions include Glu223, Arg244, and His250–Arg253.

Belongs to the phosphofructokinase type A (PFKA) family. ATP-dependent PFK group I subfamily. Prokaryotic clade 'B1' sub-subfamily. In terms of assembly, homotetramer. Mg(2+) is required as a cofactor.

Its subcellular location is the cytoplasm. The enzyme catalyses beta-D-fructose 6-phosphate + ATP = beta-D-fructose 1,6-bisphosphate + ADP + H(+). Its pathway is carbohydrate degradation; glycolysis; D-glyceraldehyde 3-phosphate and glycerone phosphate from D-glucose: step 3/4. With respect to regulation, allosterically activated by ADP and other diphosphonucleosides, and allosterically inhibited by phosphoenolpyruvate. Its function is as follows. Catalyzes the phosphorylation of D-fructose 6-phosphate to fructose 1,6-bisphosphate by ATP, the first committing step of glycolysis. This chain is ATP-dependent 6-phosphofructokinase, found in Klebsiella pneumoniae (strain 342).